A 314-amino-acid chain; its full sequence is tRNA dimethylallyltransferase (314 aa).

13-20 (GPTAVGKT) is a binding site for ATP. 15 to 20 (TAVGKT) is a substrate binding site. Positions 38-41 (DSMQ) are interaction with substrate tRNA.

The protein belongs to the IPP transferase family. In terms of assembly, monomer. Mg(2+) serves as cofactor.

The enzyme catalyses adenosine(37) in tRNA + dimethylallyl diphosphate = N(6)-dimethylallyladenosine(37) in tRNA + diphosphate. In terms of biological role, catalyzes the transfer of a dimethylallyl group onto the adenine at position 37 in tRNAs that read codons beginning with uridine, leading to the formation of N6-(dimethylallyl)adenosine (i(6)A). This chain is tRNA dimethylallyltransferase, found in Bacillus subtilis (strain 168).